The primary structure comprises 937 residues: Coiled-coil domain-containing protein 39 (937 aa).

4 coiled-coil regions span residues 16 to 137 (AIPV…CQMN), 165 to 339 (QQDD…KKDI), 365 to 615 (EKTL…SQIR), and 664 to 816 (VIKA…LKQT). The segment at 866–937 (LPTARGPSSR…NIPKEKKLSK (72 aa)) is disordered. Residues 873-887 (SSRSSSQSSSLSSFR) are compositionally biased toward low complexity. 2 positions are modified to phosphoserine: serine 888 and serine 896. The span at 915–928 (NDSSRSASSGSNSN) shows a compositional bias: low complexity.

This sequence belongs to the CCDC39 family. In terms of tissue distribution, strongly expressed in tissues rich in ciliated cells. Expressed in olfactory and vomeronasal sensory neurons and the respiratory epithelium. Expressed in node cells carrying motile cilia, in upper and lower airways, and in ependymal and choroid plexus cells.

It is found in the cytoplasm. It localises to the cytoskeleton. Its subcellular location is the cilium axoneme. In terms of biological role, required for assembly of dynein regulatory complex (DRC) and inner dynein arm (IDA) complexes, which are responsible for ciliary beat regulation, thereby playing a central role in motility in cilia and flagella. Probably acts together with CCDC40 to form a molecular ruler that determines the 96 nanometer (nm) repeat length and arrangements of components in cilia and flagella. Not required for outer dynein arm complexes assembly. The chain is Coiled-coil domain-containing protein 39 from Mus musculus (Mouse).